Consider the following 381-residue polypeptide: p55-v-Fos-transforming protein (381 aa).

A bZIP domain is found at 137 to 200 (EEKRRIRRER…EKLEFILAAH (64 aa)). Positions 139 to 159 (KRRIRRERNKMAAAKCRNRRR) are basic motif. The segment at 165-193 (LQAETDQLEDKKSALQTEIANLLKEKEKL) is leucine-zipper.

Belongs to the bZIP family. Fos subfamily.

Its subcellular location is the host nucleus. In Mus musculus (Mouse), this protein is p55-v-Fos-transforming protein (V-FOS).